We begin with the raw amino-acid sequence, 93 residues long: Cell division topological specificity factor (93 aa).

It belongs to the MinE family.

In terms of biological role, prevents the cell division inhibition by proteins MinC and MinD at internal division sites while permitting inhibition at polar sites. This ensures cell division at the proper site by restricting the formation of a division septum at the midpoint of the long axis of the cell. This chain is Cell division topological specificity factor, found in Halorhodospira halophila (strain DSM 244 / SL1) (Ectothiorhodospira halophila (strain DSM 244 / SL1)).